Reading from the N-terminus, the 324-residue chain is Germination protease (324 aa).

A propeptide spanning residues 1-10 (MIIVLGIRTD) is cleaved from the precursor.

The protein belongs to the peptidase A25 family. As to quaternary structure, homotetramer. In terms of processing, autoproteolytically processed. The inactive tetrameric zymogen termed p46 autoprocesses to a smaller form termed p41, which is active only during spore germination.

It carries out the reaction Endopeptidase action with P4 Glu or Asp, P1 preferably Glu &gt; Asp, P1' hydrophobic and P2' Ala.. In terms of biological role, initiates the rapid degradation of small, acid-soluble proteins during spore germination. The protein is Germination protease of Caldanaerobacter subterraneus subsp. tengcongensis (strain DSM 15242 / JCM 11007 / NBRC 100824 / MB4) (Thermoanaerobacter tengcongensis).